The following is a 148-amino-acid chain: Large ribosomal subunit protein uL15 (148 aa).

The tract at residues 1–51 is disordered; it reads MNLSNLKPAEGSTKTRKRIGRGPGSGLGGTSTRGHKGAKSRSGYSKKIGFE. The segment covering 21–31 has biased composition (gly residues); it reads RGPGSGLGGTS.

The protein belongs to the universal ribosomal protein uL15 family. As to quaternary structure, part of the 50S ribosomal subunit.

Binds to the 23S rRNA. The protein is Large ribosomal subunit protein uL15 of Phocaeicola vulgatus (strain ATCC 8482 / DSM 1447 / JCM 5826 / CCUG 4940 / NBRC 14291 / NCTC 11154) (Bacteroides vulgatus).